Reading from the N-terminus, the 239-residue chain is Small ribosomal subunit protein uS2 (239 aa).

This sequence belongs to the universal ribosomal protein uS2 family.

This Prochlorococcus marinus (strain MIT 9313) protein is Small ribosomal subunit protein uS2.